We begin with the raw amino-acid sequence, 479 residues long: Ribosomal protein uS12 methylthiotransferase RimO (479 aa).

A disordered region spans residues 1 to 34 (MTVNTFDPSKASPVTHASDSASKTPEPNAVAAPS). Residues 15–25 (THASDSASKTP) show a composition bias toward polar residues. The region spanning 39 to 151 (NRVGFVSLGC…VMGAVHGYIP (113 aa)) is the MTTase N-terminal domain. 6 residues coordinate [4Fe-4S] cluster: Cys48, Cys84, Cys113, Cys184, Cys188, and Cys191. A Radical SAM core domain is found at 170-407 (LTPRHYAYLK…METQQAISAA (238 aa)). The TRAM domain maps to 410–476 (KQKVGYEMDV…DYDLTGIAVE (67 aa)).

The protein belongs to the methylthiotransferase family. RimO subfamily. Requires [4Fe-4S] cluster as cofactor.

It is found in the cytoplasm. The enzyme catalyses L-aspartate(89)-[ribosomal protein uS12]-hydrogen + (sulfur carrier)-SH + AH2 + 2 S-adenosyl-L-methionine = 3-methylsulfanyl-L-aspartate(89)-[ribosomal protein uS12]-hydrogen + (sulfur carrier)-H + 5'-deoxyadenosine + L-methionine + A + S-adenosyl-L-homocysteine + 2 H(+). Its function is as follows. Catalyzes the methylthiolation of an aspartic acid residue of ribosomal protein uS12. The chain is Ribosomal protein uS12 methylthiotransferase RimO from Saccharophagus degradans (strain 2-40 / ATCC 43961 / DSM 17024).